Consider the following 430-residue polypeptide: Potassium channel subfamily K member 12 (430 aa).

At 1–38 the chain is on the cytoplasmic side; that stretch reads MSSRSPRPPPRRSRRRLPRPSCCCCCCRRSHLNEDTGR. An ER retention/retrieval signal region spans residues 11–16; sequence RRSRRR. Residues 39 to 59 traverse the membrane as a helical segment; it reads FVLLAALIGLYLVAGATVFSA. The N-linked (GlcNAc...) asparagine glycan is linked to Asn-78. The segment at residues 114–134 is an intramembrane region (pore-forming); sequence WDFPGAFYFVGTVVSTIGFGM. Thr-129, Ile-130, and Gly-131 together coordinate K(+). Residues 129–134 are selectivity filter 1; it reads TIGFGM. The chain crosses the membrane as a helical span at residues 145 to 165; that stretch reads FLIAYGLFGCAGTILFFNLFL. At 166 to 212 the chain is on the cytoplasmic side; sequence ERIISLLAFIMRACRERQLRRSGLLPATFRRGSALSEADSLAGWKPS. A helical transmembrane segment spans residues 213 to 233; sequence VYHVLLILGLFAVLLSCCASA. The segment at residues 243-263 is an intramembrane region (pore-forming); that stretch reads YVDSLYFCFVTFSTIGFGDLV. K(+) is bound by residues Thr-256, Ile-257, Gly-258, and Phe-259. The segment at 256-261 is selectivity filter 2; it reads TIGFGD. Residues 282–302 traverse the membrane as a helical segment; the sequence is LFILLGVCCIYSLFNVISILI. Residues 303 to 430 are Cytoplasmic-facing; the sequence is KQVLNWMLRK…NRLAETSASR (128 aa).

This sequence belongs to the two pore domain potassium channel (TC 1.A.1.8) family. As to quaternary structure, homodimer. Heterodimer with KCNK13.

It localises to the cell membrane. It is found in the endoplasmic reticulum membrane. It catalyses the reaction K(+)(in) = K(+)(out). K(+) channel subunit that may homo- and heterodimerize to form functional channels with distinct regulatory and gating properties. Can heterodimerize with KCNK13 subunit to conduct K(+) outward rectifying currents at the plasma membrane. The homodimers are mainly retained in the endoplasmic reticulum compartment and may be targeted to the cell surface upon phosphorylation or other activation signals yet to be elucidated. In Homo sapiens (Human), this protein is Potassium channel subfamily K member 12.